A 72-amino-acid polypeptide reads, in one-letter code: Alpha-elapitoxin-Ast2b (72 aa).

Cystine bridges form between Cys-3/Cys-20, Cys-13/Cys-41, Cys-26/Cys-30, Cys-45/Cys-56, and Cys-57/Cys-62. The residue at position 72 (Arg-72) is an Arginine amide.

It belongs to the three-finger toxin family. Long-chain subfamily. Type II alpha-neurotoxin sub-subfamily. Expressed by the venom gland.

Its subcellular location is the secreted. Functionally, binds with high affinity to muscular (alpha-1/CHRNA1) and neuronal (alpha-7/CHRNA7) nicotinic acetylcholine receptor (nAChR) and inhibits acetylcholine from binding to the receptor, thereby impairing neuromuscular and neuronal transmission. This is Alpha-elapitoxin-Ast2b from Hydrophis stokesii (Stokes's sea snake).